A 488-amino-acid polypeptide reads, in one-letter code: 3-octaprenyl-4-hydroxybenzoate carboxy-lyase (488 aa).

Asn-172 serves as a coordination point for Mn(2+). Residues 175–177 (IYR), 189–191 (RWL), and 194–195 (RG) each bind prenylated FMN. A Mn(2+)-binding site is contributed by Glu-238. The active-site Proton donor is the Asp-287.

The protein belongs to the UbiD family. As to quaternary structure, homohexamer. Requires prenylated FMN as cofactor. The cofactor is Mn(2+).

The protein localises to the cell membrane. It carries out the reaction a 4-hydroxy-3-(all-trans-polyprenyl)benzoate + H(+) = a 2-(all-trans-polyprenyl)phenol + CO2. It participates in cofactor biosynthesis; ubiquinone biosynthesis. Its function is as follows. Catalyzes the decarboxylation of 3-octaprenyl-4-hydroxy benzoate to 2-octaprenylphenol, an intermediate step in ubiquinone biosynthesis. The polypeptide is 3-octaprenyl-4-hydroxybenzoate carboxy-lyase (Pseudomonas savastanoi pv. phaseolicola (strain 1448A / Race 6) (Pseudomonas syringae pv. phaseolicola (strain 1448A / Race 6))).